Consider the following 256-residue polypeptide: Ribonuclease 3 (256 aa).

The 123-residue stretch at 3-125 (LDALQQRLGY…IVGAVFLDAG (123 aa)) folds into the RNase III domain. Glu38 serves as a coordination point for Mg(2+). Asp42 is an active-site residue. Residues Asp111 and Glu114 each contribute to the Mg(2+) site. The active site involves Glu114. In terms of domain architecture, DRBM spans 152-222 (DAKTLLQEYL…AKLALDEVQK (71 aa)). A disordered region spans residues 229–256 (KRSRAERTGKTRKQPVPPDPQLSLRLKE).

Belongs to the ribonuclease III family. In terms of assembly, homodimer. Mg(2+) serves as cofactor.

It is found in the cytoplasm. It carries out the reaction Endonucleolytic cleavage to 5'-phosphomonoester.. Its function is as follows. Digests double-stranded RNA. Involved in the processing of primary rRNA transcript to yield the immediate precursors to the large and small rRNAs (23S and 16S). Processes some mRNAs, and tRNAs when they are encoded in the rRNA operon. Processes pre-crRNA and tracrRNA of type II CRISPR loci if present in the organism. This is Ribonuclease 3 from Cupriavidus pinatubonensis (strain JMP 134 / LMG 1197) (Cupriavidus necator (strain JMP 134)).